Reading from the N-terminus, the 279-residue chain is Large ribosomal subunit protein uL2 (279 aa).

Positions T223 to K279 are disordered. Residues W254 to K267 are compositionally biased toward basic residues.

Belongs to the universal ribosomal protein uL2 family. In terms of assembly, part of the 50S ribosomal subunit. Forms a bridge to the 30S subunit in the 70S ribosome.

Functionally, one of the primary rRNA binding proteins. Required for association of the 30S and 50S subunits to form the 70S ribosome, for tRNA binding and peptide bond formation. It has been suggested to have peptidyltransferase activity; this is somewhat controversial. Makes several contacts with the 16S rRNA in the 70S ribosome. In Ureaplasma urealyticum serovar 10 (strain ATCC 33699 / Western), this protein is Large ribosomal subunit protein uL2.